Here is a 2871-residue protein sequence, read N- to C-terminus: Fibrillin-1 (2871 aa).

The signal sequence occupies residues 1 to 24; sequence MRRGRLLEIALGFTVLLASYTSHG. Residues 25-44 constitute a propeptide that is removed on maturation; sequence ADANLEAGNVKETRASRAKR. The tract at residues 45 to 81 is fibrillin unique N-terminal (FUN) domain; it reads RGGGGHDALKGPNVCGSRYNAYCCPGWKTLPGGNQCI. Residues 45 to 450 form an N-terminal domain region; it reads RGGGGHDALK…PPRVLPVNVT (406 aa). Cystine bridges form between cysteine 59–cysteine 68, cysteine 67–cysteine 80, cysteine 85–cysteine 94, cysteine 89–cysteine 100, cysteine 102–cysteine 111, cysteine 119–cysteine 129, cysteine 123–cysteine 134, cysteine 136–cysteine 145, cysteine 150–cysteine 160, cysteine 154–cysteine 166, and cysteine 168–cysteine 177. EGF-like domains lie at 81–112, 115–146, and 147–178; these read IVPI…PSCG, SIQH…THCG, and QPVC…PQCE. Positions 119 to 329 are interaction with MFAP4; sequence CNIRCMNGGS…YTSPDGTRCI (211 aa). The TB 1 domain maps to 184-236; sequence GPCFTVISNQMCQGQLSGIVCTKTLCCATVGRAWGHPCEMCPAQPHPCRRGFI. The hybrid domain 1 stretch occupies residues 195–221; the sequence is CQGQLSGIVCTKTLCCATVGRAWGHPC. An EGF-like 4; calcium-binding domain is found at 246 to 287; it reads DVDECQAIPGLCQGGNCINTVGSFECKCPAGHKLNEVSQKCE. 6 cysteine pairs are disulfide-bonded: cysteine 250–cysteine 262, cysteine 257–cysteine 271, cysteine 273–cysteine 286, cysteine 292–cysteine 304, cysteine 299–cysteine 313, and cysteine 315–cysteine 328. The O-linked (Glc) serine glycan is linked to serine 268. The region spanning 288-329 is the EGF-like 5; calcium-binding domain; the sequence is DIDECSTIPGICEGGECTNTVSSYFCKCPPGFYTSPDGTRCI. The region spanning 334–389 is the TB 2 domain; sequence GYCYTALTNGRCSNQLPQSITKMQCCCDAGRCWSPGVTVAPEMCPIRATEDFNKLC. A glycan (N-linked (GlcNAc...) asparagine) is linked at asparagine 448. The 41-residue stretch at 449–489 folds into the EGF-like 6 domain; that stretch reads VTDYCQLVRYLCQNGRCIPTPGSYRCECNKGFQLDLRGECI. 15 cysteine pairs are disulfide-bonded: cysteine 453–cysteine 465, cysteine 460–cysteine 474, cysteine 476–cysteine 488, cysteine 494–cysteine 504, cysteine 499–cysteine 513, cysteine 515–cysteine 528, cysteine 534–cysteine 546, cysteine 541–cysteine 555, cysteine 557–cysteine 570, cysteine 576–cysteine 587, cysteine 582–cysteine 596, cysteine 598–cysteine 611, cysteine 617–cysteine 628, cysteine 623–cysteine 637, and cysteine 639–cysteine 652. An O-linked (Glc) serine glycan is attached at serine 471. The EGF-like 7; calcium-binding domain occupies 490–529; sequence DVDECEKNPCAGGECINNQGSYTCQCRAGYQSTLTRTECR. Serine 510 carries O-linked (Glc) serine glycosylation. Positions 530-571 constitute an EGF-like 8; calcium-binding domain; that stretch reads DIDECLQNGRICNNGRCINTDGSFHCVCNAGFHVTRDGKNCE. Serine 552 carries O-linked (Glc) serine glycosylation. The region spanning 572–612 is the EGF-like 9; calcium-binding domain; sequence DMDECSIRNMCLNGMCINEDGSFKCICKPGFQLASDGRYCK. Serine 593 carries O-linked (Glc) serine glycosylation. One can recognise an EGF-like 10; calcium-binding domain in the interval 613–653; that stretch reads DINECETPGICMNGRCVNTDGSYRCECFPGLAVGLDGRVCV. O-linked (Glc) serine glycosylation is present at serine 634. The region spanning 659 to 711 is the TB 3 domain; the sequence is STCYGGYKRGQCIKPLFGAVTKSECCCASTEYAFGEPCQPCPAQNSAEYQALC. Positions 723-764 constitute an EGF-like 11; calcium-binding domain; that stretch reads DINECALDPDICPNGICENLRGTYKCICNSGYEVDSTGKNCV. Intrachain disulfides connect cysteine 727–cysteine 739, cysteine 734–cysteine 748, cysteine 750–cysteine 763, cysteine 769–cysteine 781, cysteine 776–cysteine 790, cysteine 792–cysteine 805, cysteine 811–cysteine 821, cysteine 816–cysteine 830, cysteine 832–cysteine 845, cysteine 853–cysteine 875, cysteine 862–cysteine 887, cysteine 876–cysteine 890, cysteine 896–cysteine 908, cysteine 914–cysteine 926, cysteine 921–cysteine 935, and cysteine 937–cysteine 950. Residues 765 to 806 form the EGF-like 12; calcium-binding domain; sequence DINECVLNSLLCDNGQCRNTPGSFVCTCPKGFIYKPDLKTCE. Residue serine 787 is glycosylated (O-linked (Glc) serine). In terms of domain architecture, EGF-like 13; calcium-binding spans 807 to 846; it reads DIDECESSPCINGVCKNSPGSFICECSSESTLDPTKTICI. Serine 827 carries O-linked (Glc) serine glycosylation. A TB 4 domain is found at 851-902; that stretch reads GTCWQTVIDGRCEININGATLKSQCCSSLGAAWGSPCTLCQVDPICGKGYSR. Positions 862 to 887 are hybrid domain 2; the sequence is CEININGATLKSQCCSSLGAAWGSPC. Residues 910–951 enclose the EGF-like 14; calcium-binding domain; sequence DIDECEVFPGVCKNGLCVNTRGSFKCQCPSGMTLDATGRICL. Residues 956–1008 form the TB 5 domain; the sequence is ETCFLRYEDEECTLPIAGRHRMDACCCSVGAAWGTEECEECPMRNTPEYEELC. Residues 1028-1069 enclose the EGF-like 15; calcium-binding domain; sequence DINECKMIPSLCTHGKCRNTIGSFKCRCDSGFALDSEERNCT. 46 disulfide bridges follow: cysteine 1032–cysteine 1044, cysteine 1039–cysteine 1053, cysteine 1055–cysteine 1068, cysteine 1074–cysteine 1086, cysteine 1081–cysteine 1095, cysteine 1097–cysteine 1111, cysteine 1117–cysteine 1129, cysteine 1124–cysteine 1138, cysteine 1140–cysteine 1153, cysteine 1159–cysteine 1171, cysteine 1166–cysteine 1180, cysteine 1182–cysteine 1195, cysteine 1201–cysteine 1212, cysteine 1208–cysteine 1221, cysteine 1223–cysteine 1236, cysteine 1242–cysteine 1254, cysteine 1249–cysteine 1263, cysteine 1265–cysteine 1278, cysteine 1284–cysteine 1296, cysteine 1291–cysteine 1305, cysteine 1307–cysteine 1320, cysteine 1326–cysteine 1339, cysteine 1333–cysteine 1348, cysteine 1350–cysteine 1361, cysteine 1367–cysteine 1380, cysteine 1374–cysteine 1389, cysteine 1391–cysteine 1402, cysteine 1408–cysteine 1420, cysteine 1415–cysteine 1429, cysteine 1431–cysteine 1444, cysteine 1450–cysteine 1461, cysteine 1456–cysteine 1470, cysteine 1472–cysteine 1485, cysteine 1491–cysteine 1502, cysteine 1497–cysteine 1511, cysteine 1513–cysteine 1526, cysteine 1534–cysteine 1562, cysteine 1549–cysteine 1574, cysteine 1563–cysteine 1577, cysteine 1564–cysteine 1589, cysteine 1610–cysteine 1622, cysteine 1617–cysteine 1631, cysteine 1633–cysteine 1646, cysteine 1652–cysteine 1663, cysteine 1658–cysteine 1672, and cysteine 1674–cysteine 1687. An O-linked (Glc) serine glycan is attached at serine 1050. The N-linked (GlcNAc...) asparagine glycan is linked to asparagine 1067. In terms of domain architecture, EGF-like 16; calcium-binding spans 1070-1112; sequence DIDECRISPDLCGRGQCVNTPGDFECKCDEGYESGFMMMKNCM. The EGF-like 17; calcium-binding domain maps to 1113–1154; the sequence is DIDECQRDPLLCRGGVCHNTEGSYRCECPPGHQLSPNISACI. Serine 1135 carries an O-linked (Glc) serine glycan. N-linked (GlcNAc...) asparagine glycosylation is present at asparagine 1149. In terms of domain architecture, EGF-like 18; calcium-binding spans 1155-1196; it reads DINECELSAHLCPNGRCVNLIGKYQCACNPGYHSTPDRLFCV. The region spanning 1197-1237 is the EGF-like 19; calcium-binding domain; sequence DIDECSIMNGGCETFCTNSEGSYECSCQPGFALMPDQRSCT. An O-linked (Glc) serine glycan is attached at serine 1218. The EGF-like 20; calcium-binding domain occupies 1238 to 1279; that stretch reads DIDECEDNPNICDGGQCTNIPGEYRCLCYDGFMASEDMKTCV. Residues 1280–1321 enclose the EGF-like 21; calcium-binding domain; that stretch reads DVNECDLNPNICLSGTCENTKGSFICHCDMGYSGKKGKTGCT. An O-linked (Glc) serine glycan is attached at serine 1302. An EGF-like 22; calcium-binding domain is found at 1322–1362; that stretch reads DINECEIGAHNCGKHAVCTNTAGSFKCSCSPGWIGDGIKCT. A glycan (O-linked (Glc) serine) is linked at serine 1345. The region spanning 1363 to 1403 is the EGF-like 23; calcium-binding domain; it reads DLDECSNGTHMCSQHADCKNTMGSYRCLCKEGYTGDGFTCT. Asparagine 1369 carries an N-linked (GlcNAc...) asparagine glycan. A glycan (O-linked (Glc) serine) is linked at serine 1386. Residues 1404–1445 enclose the EGF-like 24; calcium-binding domain; sequence DLDECSENLNLCGNGQCLNAPGGYRCECDMGFVPSADGKACE. Residues 1446-1486 enclose the EGF-like 25; calcium-binding domain; the sequence is DIDECSLPNICVFGTCHNLPGLFRCECEIGYELDRSGGNCT. Asparagine 1484 is a glycosylation site (N-linked (GlcNAc...) asparagine). One can recognise an EGF-like 26; calcium-binding domain in the interval 1487–1527; the sequence is DVNECLDPTTCISGNCVNTPGSYICDCPPDFELNPTRVGCV. Serine 1508 is a glycosylation site (O-linked (Glc) serine). Residues 1528-2731 form a C-terminal domain region; sequence DTRSGNCYLD…GYPKRGRKRR (1204 aa). The 58-residue stretch at 1532-1589 folds into the TB 6 domain; the sequence is GNCYLDIRPRGDNGDTACSNEIGVGVSKASCCCSLGKAWGTPCEMCPAVNTSEYKILC. The Cell attachment site motif lies at 1541 to 1543; sequence RGD. The N-linked (GlcNAc...) asparagine glycan is linked to asparagine 1581. Residues 1606 to 1647 enclose the EGF-like 27; calcium-binding domain; it reads DIDECQELPGLCQGGKCINTFGSFQCRCPTGYYLNEDTRVCD. Serine 1628 carries an O-linked (Glc) serine glycan. Positions 1648–1688 constitute an EGF-like 28; calcium-binding domain; that stretch reads DVNECETPGICGPGTCYNTVGNYTCICPPDYMQVNGGNNCM. An N-linked (GlcNAc...) asparagine glycan is attached at asparagine 1669. In terms of domain architecture, TB 7 spans 1693–1748; it reads SLCYRNYYADNQTCDGELLFNMTKKMCCCSYNIGRAWNKPCEQCPIPSTDEFATLC. Residues asparagine 1703 and asparagine 1713 are each glycosylated (N-linked (GlcNAc...) asparagine). The EGF-like 29; calcium-binding domain occupies 1766-1807; sequence DIDECREIPGVCENGVCINMVGSFRCECPVGFFYNDKLLVCE. 40 disulfides stabilise this stretch: cysteine 1770–cysteine 1782, cysteine 1777–cysteine 1791, cysteine 1793–cysteine 1806, cysteine 1812–cysteine 1824, cysteine 1818–cysteine 1833, cysteine 1835–cysteine 1847, cysteine 1853–cysteine 1865, cysteine 1860–cysteine 1874, cysteine 1876–cysteine 1889, cysteine 1895–cysteine 1905, cysteine 1900–cysteine 1914, cysteine 1916–cysteine 1928, cysteine 1934–cysteine 1947, cysteine 1942–cysteine 1956, cysteine 1958–cysteine 1971, cysteine 1977–cysteine 1989, cysteine 1984–cysteine 1998, cysteine 2000–cysteine 2011, cysteine 2017–cysteine 2029, cysteine 2024–cysteine 2038, cysteine 2040–cysteine 2053, cysteine 2061–cysteine 2083, cysteine 2070–cysteine 2096, cysteine 2084–cysteine 2099, cysteine 2085–cysteine 2111, cysteine 2131–cysteine 2142, cysteine 2137–cysteine 2151, cysteine 2153–cysteine 2164, cysteine 2170–cysteine 2181, cysteine 2176–cysteine 2190, cysteine 2192–cysteine 2204, cysteine 2210–cysteine 2221, cysteine 2217–cysteine 2230, cysteine 2232–cysteine 2245, cysteine 2251–cysteine 2265, cysteine 2258–cysteine 2274, cysteine 2276–cysteine 2289, cysteine 2295–cysteine 2307, cysteine 2302–cysteine 2316, and cysteine 2318–cysteine 2331. Positions 1808–1848 constitute an EGF-like 30; calcium-binding domain; sequence DIDECQNGPVCQRNAECINTAGSYRCDCKPGYRFTSTGQCN. O-linked (Glc) serine glycosylation occurs at serine 1830. Residues 1849–1890 form the EGF-like 31; calcium-binding domain; it reads DRNECQEIPNICSHGQCIDTVGSFYCLCHTGFKTNDDQTMCL. The O-linked (Glc) serine glycan is linked to serine 1871. Positions 1891 to 1929 constitute an EGF-like 32; calcium-binding domain; that stretch reads DINECERDACGNGTCRNTIGSFNCRCNHGFILSHNNDCI. Asparagine 1902 is a glycosylation site (N-linked (GlcNAc...) asparagine). A glycan (O-linked (Glc) serine) is linked at serine 1911. Residues 1930–1972 enclose the EGF-like 33; calcium-binding domain; it reads DVDECASGNGNLCRNGQCINTVGSFQCQCNEGYEVAPDGRTCV. Serine 1953 is a glycosylation site (O-linked (Glc) serine). An EGF-like 34; calcium-binding domain is found at 1973 to 2012; that stretch reads DINECLLEPRKCAPGTCQNLDGSYRCICPPGYSLQNEKCE. One can recognise an EGF-like 35; calcium-binding domain in the interval 2013 to 2054; the sequence is DIDECVEEPEICALGTCSNTEGSFKCLCPEGFSLSSSGRRCQ. Serine 2035 is a glycosylation site (O-linked (Glc) serine). In terms of domain architecture, TB 8 spans 2059-2111; that stretch reads SYCYAKFEGGKCSSPKSRNHSKQECCCALKGEGWGDPCELCPTEPDEAFRQIC. A glycan (N-linked (GlcNAc...) asparagine) is linked at asparagine 2077. The 39-residue stretch at 2127-2165 folds into the EGF-like 36; calcium-binding domain; sequence DMDECKEPDVCKHGQCINTDGSYRCECPFGYILAGNECV. O-linked (Glc) serine glycosylation occurs at serine 2148. Residues 2166–2205 enclose the EGF-like 37; calcium-binding domain; sequence DTDECSVGNPCGNGTCKNVIGGFECTCEEGFEPGPMMTCE. A glycan (N-linked (GlcNAc...) asparagine) is linked at asparagine 2178. One can recognise an EGF-like 38; calcium-binding domain in the interval 2206–2246; that stretch reads DINECAQNPLLCAFRCVNTYGSYECKCPVGYVLREDRRMCK. O-linked (Glc) serine glycosylation occurs at serine 2227. One can recognise an EGF-like 39; calcium-binding domain in the interval 2247-2290; that stretch reads DEDECEEGKHDCTEKQMECKNLIGTYMCICGPGYQRRPDGEGCV. One can recognise an EGF-like 40; calcium-binding domain in the interval 2291-2332; sequence DENECQTKPGICENGRCLNTRGSYTCECNDGFTASPNQDECL. A glycan (O-linked (Glc) serine) is linked at serine 2313. A TB 9 domain is found at 2337–2390; the sequence is GYCFTEVLQNMCQIGSSNRNPVTKSECCCDGGRGWGPHCEICPFQGTVAFKKLC. Residues 2402–2443 form the EGF-like 41; calcium-binding domain; the sequence is DIDECKVIHDVCRNGECVNDRGSYHCICKTGYTPDITGTSCV. Cystine bridges form between cysteine 2406–cysteine 2418, cysteine 2413–cysteine 2427, cysteine 2429–cysteine 2442, cysteine 2448–cysteine 2459, cysteine 2455–cysteine 2468, cysteine 2470–cysteine 2483, cysteine 2489–cysteine 2500, cysteine 2496–cysteine 2509, cysteine 2511–cysteine 2522, cysteine 2528–cysteine 2541, cysteine 2535–cysteine 2550, cysteine 2552–cysteine 2565, cysteine 2571–cysteine 2581, cysteine 2577–cysteine 2590, cysteine 2592–cysteine 2605, cysteine 2611–cysteine 2622, cysteine 2617–cysteine 2631, cysteine 2633–cysteine 2646, cysteine 2652–cysteine 2663, cysteine 2659–cysteine 2672, and cysteine 2674–cysteine 2686. The EGF-like 42; calcium-binding domain maps to 2444 to 2484; the sequence is DLNECNQAPKPCNFICKNTEGSYQCSCPKGYILQEDGRSCK. Serine 2465 is a glycosylation site (O-linked (Glc) serine). One can recognise an EGF-like 43; calcium-binding domain in the interval 2485–2523; it reads DLDECATKQHNCQFLCVNTIGGFTCKCPPGFTQHHTSCI. An EGF-like 44; calcium-binding domain is found at 2524-2566; it reads DNNECTSDINLCGSKGICQNTPGSFTCECQRGFSLDQTGSSCE. Serine 2547 carries O-linked (Glc) serine glycosylation. Residues 2567–2606 form the EGF-like 45; calcium-binding domain; that stretch reads DVDECEGNHRCQHGCQNIIGGYRCSCPQGYLQHYQWNQCV. Residues 2607–2647 form the EGF-like 46; calcium-binding domain; that stretch reads DENECLSAHICGGASCHNTLGSYKCMCPAGFQYEQFSGGCQ. O-linked (Glc) serine glycosylation occurs at serine 2628. In terms of domain architecture, EGF-like 47; calcium-binding spans 2648–2687; it reads DINECGSAQAPCSYGCSNTEGGYLCGCPPGYFRIGQGHCV. Position 2702 is a phosphoserine; by FAM20C (serine 2702). Residue serine 2709 is modified to Phosphoserine. A disordered region spans residues 2726 to 2746; the sequence is RGRKRRSTNETDASNIEDQSE. The N-linked (GlcNAc...) asparagine glycan is linked to asparagine 2734. Over residues 2735 to 2746 the composition is skewed to polar residues; the sequence is ETDASNIEDQSE. N-linked (GlcNAc...) asparagine glycans are attached at residues asparagine 2750 and asparagine 2767.

The protein belongs to the fibrillin family. In terms of assembly, interacts with COL16A1. Interacts with integrin alpha-V/beta-3. Interacts with ADAMTS10; this interaction promotes microfibril assembly. Interacts with THSD4; this interaction promotes fibril formation. Interacts (via N-terminal domain) with FBLN2 and FBLN5. Interacts with ELN. Forms a ternary complex with ELN and FBLN2 or FBLN5 and a significant interaction with ELN seen only in the presence of FBLN2 or FBLN5. Interacts (via N-terminal domain) with LTBP2 (via C-terminal domain) in a Ca(+2)-dependent manner. Interacts (via N-terminal domain) with LTBP1 (via C-terminal domain). Interacts with integrins ITGA5:ITGB1, ITGAV:ITGB3 and ITGAV:ITGB6. Interacts (via N-terminal domain) with BMP2, BMP4, BMP7, BMP10 and GDF5. Interacts (via N-terminal domain) with MFAP2 and MFAP5. Interacts with ADAMTSL5. Interacts with MFAP4. Interacts (via N-terminal domain) with TNFSF11 in a Ca(+2)-dependent manner. Interacts (via N-terminal domain) with EFEMP2; this interaction inhibits EFEMP2 binding to LOX and ELN. In terms of processing, cleavage of N- and C-terminus by furin is required for incorporation into the extracellular matrix and assembly into microfibrils. The C-terminus, which corresponds to the Asprosin chain, was initially thought to constitute a propeptide. Fibrillin-1 and Asprosin chains are still linked together during the secretion from cells, but are subsequently separated by furin, an essential step for incorporation of Fibrillin-1 into the nascent microfibrils. Post-translationally, forms intermolecular disulfide bonds either with other fibrillin-1 molecules or with other components of the microfibrils. O-glycosylated on serine residues by POGLUT2 and POGLUT3 which is necessary for efficient protein secretion.

The protein localises to the secreted. It localises to the extracellular space. The protein resides in the extracellular matrix. In terms of biological role, structural component of the 10-12 nm diameter microfibrils of the extracellular matrix, which conveys both structural and regulatory properties to load-bearing connective tissues. Fibrillin-1-containing microfibrils provide long-term force bearing structural support. In tissues such as the lung, blood vessels and skin, microfibrils form the periphery of the elastic fiber, acting as a scaffold for the deposition of elastin. In addition, microfibrils can occur as elastin-independent networks in tissues such as the ciliary zonule, tendon, cornea and glomerulus where they provide tensile strength and have anchoring roles. Fibrillin-1 also plays a key role in tissue homeostasis through specific interactions with growth factors, such as the bone morphogenetic proteins (BMPs), growth and differentiation factors (GDFs) and latent transforming growth factor-beta-binding proteins (LTBPs), cell-surface integrins and other extracellular matrix protein and proteoglycan components. Regulates osteoblast maturation by controlling TGF-beta bioavailability and calibrating TGF-beta and BMP levels, respectively. Negatively regulates osteoclastogenesis by binding and sequestering an osteoclast differentiation and activation factor TNFSF11. This leads to disruption of TNFSF11-induced Ca(2+) signaling and impairment of TNFSF11-mediated nuclear translocation and activation of transcription factor NFATC1 which regulates genes important for osteoclast differentiation and function. Mediates cell adhesion via its binding to cell surface receptors integrins ITGAV:ITGB3 and ITGA5:ITGB1. Binds heparin and this interaction has an important role in the assembly of microfibrils. Functionally, adipokine secreted by white adipose tissue that plays an important regulatory role in the glucose metabolism of liver, muscle and pancreas. Hormone that targets the liver in response to fasting to increase plasma glucose levels. Binds the olfactory receptor OR4M1 at the surface of hepatocytes and promotes hepatocyte glucose release by activating the protein kinase A activity in the liver, resulting in rapid glucose release into the circulation. May act as a regulator of adaptive thermogenesis by inhibiting browning and energy consumption, while increasing lipid deposition in white adipose tissue. Also acts as an orexigenic hormone that increases appetite: crosses the blood brain barrier and exerts effects on the hypothalamus. In the arcuate nucleus of the hypothalamus, asprosin directly activates orexigenic AgRP neurons and indirectly inhibits anorexigenic POMC neurons, resulting in appetite stimulation. Activates orexigenic AgRP neurons via binding to the olfactory receptor OR4M1. May also play a role in sperm motility in testis via interaction with OR4M1 receptor. In Homo sapiens (Human), this protein is Fibrillin-1.